Reading from the N-terminus, the 653-residue chain is Threonine--tRNA ligase (653 aa).

The TGS domain occupies 1–61; the sequence is MIKITFPDGN…NEDAEVKLFK (61 aa). The interval 243–542 is catalytic; the sequence is DHRKIGKELE…LIEHTAGKFP (300 aa). Zn(2+) is bound by residues Cys338, His389, and His519.

The protein belongs to the class-II aminoacyl-tRNA synthetase family. In terms of assembly, homodimer. The cofactor is Zn(2+).

It is found in the cytoplasm. The enzyme catalyses tRNA(Thr) + L-threonine + ATP = L-threonyl-tRNA(Thr) + AMP + diphosphate + H(+). Its function is as follows. Catalyzes the attachment of threonine to tRNA(Thr) in a two-step reaction: L-threonine is first activated by ATP to form Thr-AMP and then transferred to the acceptor end of tRNA(Thr). Also edits incorrectly charged L-seryl-tRNA(Thr). The protein is Threonine--tRNA ligase of Porphyromonas gingivalis (strain ATCC BAA-308 / W83).